We begin with the raw amino-acid sequence, 453 residues long: Kynureninase (453 aa).

Residues Leu114, Thr115, 142 to 145 (FPSD), Asp232, His235, and Tyr257 each bind pyridoxal 5'-phosphate. Lys258 carries the post-translational modification N6-(pyridoxal phosphate)lysine. Residue Trp286 coordinates pyridoxal 5'-phosphate.

This sequence belongs to the kynureninase family. As to quaternary structure, homodimer. It depends on pyridoxal 5'-phosphate as a cofactor.

It localises to the cytoplasm. It carries out the reaction L-kynurenine + H2O = anthranilate + L-alanine + H(+). It catalyses the reaction 3-hydroxy-L-kynurenine + H2O = 3-hydroxyanthranilate + L-alanine + H(+). It functions in the pathway amino-acid degradation; L-kynurenine degradation; L-alanine and anthranilate from L-kynurenine: step 1/1. Its pathway is cofactor biosynthesis; NAD(+) biosynthesis; quinolinate from L-kynurenine: step 2/3. Catalyzes the cleavage of L-kynurenine (L-Kyn) and L-3-hydroxykynurenine (L-3OHKyn) into anthranilic acid (AA) and 3-hydroxyanthranilic acid (3-OHAA), respectively. This Cryptococcus neoformans var. neoformans serotype D (strain JEC21 / ATCC MYA-565) (Filobasidiella neoformans) protein is Kynureninase.